The chain runs to 257 residues: Probable ABC transporter arginine-binding protein ArtJ (257 aa).

Positions 1–23 (MCIKRKKTWIAFLAVVCSFCLTG) are cleaved as a signal peptide. L-arginine is bound by residues N41, E48, G100, S102, R107, and Y151.

Belongs to the bacterial solute-binding protein 3 family.

It localises to the secreted. It is found in the cell surface. In terms of biological role, probably part of an ABC transporter complex involved in arginine transport. Binds arginine. Interacts with host epithelial cells, suggesting a role in host-cell adhesion during infection. This Chlamydia trachomatis serovar D (strain ATCC VR-885 / DSM 19411 / UW-3/Cx) protein is Probable ABC transporter arginine-binding protein ArtJ.